Here is a 540-residue protein sequence, read N- to C-terminus: Chaperonin GroEL 1 (540 aa).

ATP-binding positions include Thr29–Pro32, Asp86–Thr90, Gly413, Asn477–Ala479, and Asp493.

Belongs to the chaperonin (HSP60) family. As to quaternary structure, forms a cylinder of 14 subunits composed of two heptameric rings stacked back-to-back. Interacts with the co-chaperonin GroES.

It localises to the cytoplasm. The enzyme catalyses ATP + H2O + a folded polypeptide = ADP + phosphate + an unfolded polypeptide.. In terms of biological role, together with its co-chaperonin GroES, plays an essential role in assisting protein folding. The GroEL-GroES system forms a nano-cage that allows encapsulation of the non-native substrate proteins and provides a physical environment optimized to promote and accelerate protein folding. The polypeptide is Chaperonin GroEL 1 (Salinispora arenicola (strain CNS-205)).